We begin with the raw amino-acid sequence, 392 residues long: Small ribosomal subunit protein bS1 (392 aa).

4 consecutive S1 motif domains span residues 16-90 (GDKV…LSKR), 108-173 (DEVI…LSRK), 194-262 (GDVI…LSIK), and 279-348 (DDVI…LSIK). Residues 361 to 380 (ASTTQSYLEDDNDEDKPTLG) form a disordered region.

This sequence belongs to the bacterial ribosomal protein bS1 family.

In terms of biological role, binds mRNA; thus facilitating recognition of the initiation point. It is needed to translate mRNA with a short Shine-Dalgarno (SD) purine-rich sequence. This Staphylococcus epidermidis (strain ATCC 35984 / DSM 28319 / BCRC 17069 / CCUG 31568 / BM 3577 / RP62A) protein is Small ribosomal subunit protein bS1 (rpsA).